Here is a 149-residue protein sequence, read N- to C-terminus: Sec-independent protein translocase protein TatB (149 aa).

Residues 1-21 (MFDIGFTELIVIGIVALVVVG) traverse the membrane as a helical segment. The tract at residues 92–149 (VDMLDKSVRNEPQNAQTPPQTADAEPAQPDVRQQTLPLEEPDQNRAAGEPSSTSTRPA) is disordered. The segment covering 101 to 111 (NEPQNAQTPPQ) has biased composition (polar residues).

It belongs to the TatB family. The Tat system comprises two distinct complexes: a TatABC complex, containing multiple copies of TatA, TatB and TatC subunits, and a separate TatA complex, containing only TatA subunits. Substrates initially bind to the TatABC complex, which probably triggers association of the separate TatA complex to form the active translocon.

It is found in the cell inner membrane. In terms of biological role, part of the twin-arginine translocation (Tat) system that transports large folded proteins containing a characteristic twin-arginine motif in their signal peptide across membranes. Together with TatC, TatB is part of a receptor directly interacting with Tat signal peptides. TatB may form an oligomeric binding site that transiently accommodates folded Tat precursor proteins before their translocation. This chain is Sec-independent protein translocase protein TatB, found in Thiobacillus denitrificans (strain ATCC 25259 / T1).